Reading from the N-terminus, the 332-residue chain is Ornithine carbamoyltransferase 1, catabolic (332 aa).

Residues 56-59 (STRT), glutamine 83, arginine 107, and 134-137 (HPTQ) contribute to the carbamoyl phosphate site. Residues asparagine 167, aspartate 231, and 235–236 (SM) contribute to the L-ornithine site. Carbamoyl phosphate contacts are provided by residues 273-274 (CL) and arginine 318.

The protein belongs to the aspartate/ornithine carbamoyltransferase superfamily. OTCase family.

It is found in the cytoplasm. It catalyses the reaction carbamoyl phosphate + L-ornithine = L-citrulline + phosphate + H(+). Its pathway is amino-acid degradation; L-arginine degradation via ADI pathway; carbamoyl phosphate from L-arginine: step 2/2. Functionally, reversibly catalyzes the transfer of the carbamoyl group from carbamoyl phosphate (CP) to the N(epsilon) atom of ornithine (ORN) to produce L-citrulline. This is Ornithine carbamoyltransferase 1, catabolic (arcB1) from Streptococcus agalactiae serotype III (strain NEM316).